Reading from the N-terminus, the 474-residue chain is tRNA (adenine(58)-N(1))-methyltransferase catalytic subunit trm61 (474 aa).

The tract at residues 75–109 (DTGSRGRTQKMKRKADELDSSTQAEDKPSPQTPVA) is disordered. Residues 163–165 (SGS), Glu197, Arg202, 225–226 (DV), and Asp250 each bind S-adenosyl-L-methionine. 2 disordered regions span residues 356–390 (LFRA…VPVY) and 423–474 (DEKR…SQKE). Residues 358-367 (RATQNQSDGD) are compositionally biased toward polar residues. Residues 423 to 432 (DEKRCREKWP) are compositionally biased toward basic and acidic residues. The span at 434 to 443 (NRVQEPQGPQ) shows a compositional bias: polar residues. Positions 450–474 (KRESREKRDLQRKEQSQPETESQKE) are enriched in basic and acidic residues.

Belongs to the class I-like SAM-binding methyltransferase superfamily. TRM61 family. In terms of assembly, heterotetramer; composed of two copies of TRM6 and two copies of TRM61.

Its subcellular location is the nucleus. The catalysed reaction is adenosine(58) in tRNA + S-adenosyl-L-methionine = N(1)-methyladenosine(58) in tRNA + S-adenosyl-L-homocysteine + H(+). Its function is as follows. Catalytic subunit of tRNA (adenine-N(1)-)-methyltransferase, which catalyzes the formation of N(1)-methyladenine at position 58 (m1A58) in initiator methionyl-tRNA. The chain is tRNA (adenine(58)-N(1))-methyltransferase catalytic subunit trm61 (trm61) from Aspergillus oryzae (strain ATCC 42149 / RIB 40) (Yellow koji mold).